The following is a 298-amino-acid chain: Acetate permease A (298 aa).

The tract at residues 1–43 (MSAEQNHGLEKDVGGPAAPAAAAPNAPAAAPGAPPAGMSAEEH) is disordered. The segment covering 14–37 (GGPAAPAAAAPNAPAAAPGAPPAG) has biased composition (low complexity). 6 helical membrane passes run 86–106 (APLG…INMG), 115–135 (IVIA…GMWE), 146–166 (ALSS…PGGF), 185–205 (SFGL…FCTL), 210–230 (AFFL…VGYI), and 245–265 (AGGF…LAGI).

Belongs to the acetate uptake transporter (AceTr) (TC 2.A.96) family.

The protein localises to the cell membrane. Its subcellular location is the vacuole membrane. Functionally, high affinity monocarboxylate transporter (MCT) involved in acetate uptake. Unlike other activities involved in acetate utilization, acpA is dispensable for growth on the acetate precursor ethanol. In Emericella nidulans (strain FGSC A4 / ATCC 38163 / CBS 112.46 / NRRL 194 / M139) (Aspergillus nidulans), this protein is Acetate permease A.